The chain runs to 596 residues: Elongation factor 4 (596 aa).

In terms of domain architecture, tr-type G spans 2–184 (KHIRNFSIIA…VIVEQIPPPE (183 aa)). Residues 14-19 (DHGKST) and 131-134 (NKID) contribute to the GTP site.

This sequence belongs to the TRAFAC class translation factor GTPase superfamily. Classic translation factor GTPase family. LepA subfamily.

It is found in the cell inner membrane. It carries out the reaction GTP + H2O = GDP + phosphate + H(+). In terms of biological role, required for accurate and efficient protein synthesis under certain stress conditions. May act as a fidelity factor of the translation reaction, by catalyzing a one-codon backward translocation of tRNAs on improperly translocated ribosomes. Back-translocation proceeds from a post-translocation (POST) complex to a pre-translocation (PRE) complex, thus giving elongation factor G a second chance to translocate the tRNAs correctly. Binds to ribosomes in a GTP-dependent manner. The chain is Elongation factor 4 from Shewanella pealeana (strain ATCC 700345 / ANG-SQ1).